The primary structure comprises 193 residues: dCTP deaminase (193 aa).

Residues 110-115, aspartate 128, 136-138, tyrosine 171, lysine 178, and glutamine 182 each bind dCTP; these read RSSLAR and VLE. Glutamate 138 (proton donor/acceptor) is an active-site residue. The tract at residues 169–193 is disordered; the sequence is RPYNRRQDAKYKDQQGAVASRIDKD.

Belongs to the dCTP deaminase family. In terms of assembly, homotrimer.

The catalysed reaction is dCTP + H2O + H(+) = dUTP + NH4(+). The protein operates within pyrimidine metabolism; dUMP biosynthesis; dUMP from dCTP (dUTP route): step 1/2. In terms of biological role, catalyzes the deamination of dCTP to dUTP. The polypeptide is dCTP deaminase (Pectobacterium carotovorum subsp. carotovorum (strain PC1)).